The following is a 456-amino-acid chain: Kynurenine 3-monooxygenase (456 aa).

The protein belongs to the aromatic-ring hydroxylase family. KMO subfamily. The cofactor is FAD.

The enzyme catalyses L-kynurenine + NADPH + O2 + H(+) = 3-hydroxy-L-kynurenine + NADP(+) + H2O. The protein operates within cofactor biosynthesis; NAD(+) biosynthesis; quinolinate from L-kynurenine: step 1/3. Catalyzes the hydroxylation of L-kynurenine (L-Kyn) to form 3-hydroxy-L-kynurenine (L-3OHKyn). Required for synthesis of quinolinic acid. The protein is Kynurenine 3-monooxygenase of Xanthomonas campestris pv. campestris (strain B100).